The chain runs to 459 residues: Glutamyl-tRNA reductase (459 aa).

Residues 49-52 (TCNR), serine 109, 114-116 (EQQ), and glutamine 120 each bind substrate. Cysteine 50 functions as the Nucleophile in the catalytic mechanism. 189 to 194 (GAGAMG) serves as a coordination point for NADP(+).

The protein belongs to the glutamyl-tRNA reductase family. Homodimer.

The enzyme catalyses (S)-4-amino-5-oxopentanoate + tRNA(Glu) + NADP(+) = L-glutamyl-tRNA(Glu) + NADPH + H(+). It functions in the pathway porphyrin-containing compound metabolism; protoporphyrin-IX biosynthesis; 5-aminolevulinate from L-glutamyl-tRNA(Glu): step 1/2. Catalyzes the NADPH-dependent reduction of glutamyl-tRNA(Glu) to glutamate 1-semialdehyde (GSA). The protein is Glutamyl-tRNA reductase of Mycolicibacterium paratuberculosis (strain ATCC BAA-968 / K-10) (Mycobacterium paratuberculosis).